The following is a 27-amino-acid chain: Cupiennin-3c (27 aa).

In terms of tissue distribution, expressed by the venom gland.

It localises to the secreted. The chain is Cupiennin-3c from Cupiennius salei (American wandering spider).